A 221-amino-acid polypeptide reads, in one-letter code: Translation initiation factor 6 (221 aa).

Belongs to the eIF-6 family.

Binds to the 50S ribosomal subunit and prevents its association with the 30S ribosomal subunit to form the 70S initiation complex. The sequence is that of Translation initiation factor 6 from Nitrosopumilus maritimus (strain SCM1).